The sequence spans 827 residues: Transcription factor SOX-6 (827 aa).

Polar residues predominate over residues 1–10 (MSSKQATSPF). Residues 1–51 (MSSKQATSPFACTVDGEETMTQDLTSREKEEGSDQHPASHLPLHPIMHNKP) are disordered. The segment covering 25–34 (TSREKEEGSD) has biased composition (basic and acidic residues). Thr119 carries the phosphothreonine modification. Residues 184–257 (LAEKERQLST…QHKINLLQQQ (74 aa)) are a coiled coil. Disordered stretches follow at residues 329 to 360 (HVSHPQINPRLKGISDRLGRNLDPYEHGGGHS) and 380 to 470 (SPGA…PIGG). The span at 341 to 357 (GISDRLGRNLDPYEHGG) shows a compositional bias: basic and acidic residues. A Phosphoserine modification is found at Ser399. Thr401 carries the post-translational modification Phosphothreonine. Glycyl lysine isopeptide (Lys-Gly) (interchain with G-Cter in SUMO) cross-links involve residues Lys404 and Lys417. Polar residues-rich tracts occupy residues 421–431 (TAQPLNLSSRP) and 439–461 (SPTSPTQSLFPASKTSPVNLPNK). Residues Ser439 and Ser442 each carry the phosphoserine modification. Positions 620-688 (IKRPMNAFMV…IHLEKYPNYK (69 aa)) form a DNA-binding region, HMG box. Disordered stretches follow at residues 752 to 772 (TPSPQMTSDCSSTSASPEPSL) and 786 to 827 (ASLA…VSAN). A compositionally biased stretch (acidic residues) spans 795-808 (NGEDEMEAYDDYED).

As to quaternary structure, homodimer. Interacts with DAZAP2. May interact with CENPK. In terms of processing, sumoylation inhibits the transcriptional activity.

Its subcellular location is the nucleus. The protein localises to the cytoplasm. In terms of biological role, transcription factor that plays a key role in several developmental processes, including neurogenesis, chondrocytes differentiation and cartilage formation. Specifically binds the 5'-AACAAT-3' DNA motif present in enhancers and super-enhancers and promotes expression of genes important for chondrogenesis. Required for overt chondrogenesis when condensed prechondrocytes differentiate into early stage chondrocytes: SOX5 and SOX6 cooperatively bind with SOX9 on active enhancers and super-enhancers associated with cartilage-specific genes, and thereby potentiate SOX9's ability to transactivate. Not involved in precartilaginous condensation, the first step in chondrogenesis, during which skeletal progenitors differentiate into prechondrocytes. Together with SOX5, required to form and maintain a pool of highly proliferating chondroblasts between epiphyses and metaphyses, to form columnar chondroblasts, delay chondrocyte prehypertrophy but promote hypertrophy, and to delay terminal differentiation of chondrocytes on contact with ossification fronts. Binds to the proximal promoter region of the myelin protein MPZ gene, and is thereby involved in the differentiation of oligodendroglia in the developing spinal tube. Binds to the gene promoter of MBP and acts as a transcriptional repressor. This chain is Transcription factor SOX-6, found in Rattus norvegicus (Rat).